Reading from the N-terminus, the 199-residue chain is Glycerol-3-phosphate acyltransferase (199 aa).

Transmembrane regions (helical) follow at residues 3–23, 50–70, 78–98, 113–133, and 154–174; these read AAVW…GVLV, WGPA…AVLV, DWML…SVFL, LLFL…SVIL, and LALG…LLIF.

Belongs to the PlsY family. In terms of assembly, probably interacts with PlsX.

The protein localises to the cell inner membrane. It carries out the reaction an acyl phosphate + sn-glycerol 3-phosphate = a 1-acyl-sn-glycero-3-phosphate + phosphate. It functions in the pathway lipid metabolism; phospholipid metabolism. Its function is as follows. Catalyzes the transfer of an acyl group from acyl-phosphate (acyl-PO(4)) to glycerol-3-phosphate (G3P) to form lysophosphatidic acid (LPA). This enzyme utilizes acyl-phosphate as fatty acyl donor, but not acyl-CoA or acyl-ACP. This Thermus thermophilus (strain ATCC BAA-163 / DSM 7039 / HB27) protein is Glycerol-3-phosphate acyltransferase.